Reading from the N-terminus, the 1049-residue chain is Retinoblastoma-like protein 1 (1049 aa).

Thr332, Thr369, and Thr385 each carry phosphothreonine. The domain A stretch occupies residues 385-584 (TPVASATQSV…WEALRASANK (200 aa)). The interval 385–944 (TPVASATQSV…GRVKSFALKY (560 aa)) is pocket; binds T and E1A. The spacer stretch occupies residues 585–779 (VPSCEEVIFP…TQDAPLTGIS (195 aa)). Phosphoserine occurs at positions 640, 650, 748, and 761. Positions 780 to 944 (KPKRTGSLAL…GRVKSFALKY (165 aa)) are domain B. Phosphoserine occurs at positions 959, 970, and 983. The residue at position 992 (Thr992) is a Phosphothreonine. Residues Ser1004 and Ser1022 each carry the phosphoserine modification.

The protein belongs to the retinoblastoma protein (RB) family. In terms of assembly, component of the DREAM complex (also named LINC complex) at least composed of E2F4, E2F5, LIN9, LIN37, LIN52, LIN54, MYBL1, MYBL2, RBL1, RBL2, RBBP4, TFDP1 and TFDP2. The complex exists in quiescent cells where it represses cell cycle-dependent genes. It dissociates in S phase when LIN9, LIN37, LIN52 and LIN54 form a subcomplex that binds to MYBL2. Interacts with AATF. Interacts with KDM5A. Interacts with KMT5B and KMT5C. Interacts with USP4. Interacts with RBBP9. In terms of processing, cell-cycle arrest properties are inactivated by phosphorylation on Thr-332, Ser-640, Ser-959 and Ser-970 by CDK4.

It localises to the nucleus. In terms of biological role, key regulator of entry into cell division. Directly involved in heterochromatin formation by maintaining overall chromatin structure and, in particular, that of constitutive heterochromatin by stabilizing histone methylation. Recruits and targets histone methyltransferases KMT5B and KMT5C, leading to epigenetic transcriptional repression. Controls histone H4 'Lys-20' trimethylation. Probably acts as a transcription repressor by recruiting chromatin-modifying enzymes to promoters. Potent inhibitor of E2F-mediated trans-activation. May act as a tumor suppressor. The chain is Retinoblastoma-like protein 1 from Rattus norvegicus (Rat).